The primary structure comprises 140 residues: Small ribosomal subunit protein uS12m (140 aa).

It belongs to the universal ribosomal protein uS12 family.

The protein localises to the mitochondrion. The sequence is that of Small ribosomal subunit protein uS12m (mrps12) from Dictyostelium citrinum (Slime mold).